The sequence spans 1433 residues: MAFRKENKIKNNFSKIRITLASPEEILENSFGEVLKPETINYRTYKPERDGLFCERIFGPVKDFECHCGKYKRIRYRGIVCDRCGVEVTEKKVRRERMGHIHLVVPVAHIWYFRSLPNKIGYLLGLPTKKLDAIIYYERYVVIQPGVAEGLSQLDLLSEEEYLDKLDEIERTHKGNQNLEDTNPDKFIAKIGAEAIYDLLCRVDLDSISYELRDRANTDGSQQRKTEALKRLQVVESFRASKGVNRPEWMVMKVIPVIPPDLRPLVPLDGGRFATSDLNDLYRRVIIRNNRLKRLIEIKAPEVILRNEKRMLQEAVDSLFDNSRKSSAVKSDNNRPLKSLSDSLKGKQGRFRQNLLGKRVDYSARSVIVVGPELKMHECGLPKDMAAELYKPFIIRKLIERGIVKTVKSAKKIVDRKEPVIWDILEYVMKGHPVLLNRAPTLHRLGIQAFQPKLIEGKAIQLHPLSCTAFNADFDGDQMAVHLPLSNEAILEAQLLMLASHNILNPANGAPITVPSQDMVLGLYYITKLRPNTKGHGLIFYGPEEATIAYNEGKVDIHAPIKVYVEDYENGELVRRMVETSVGRLMVNEYVPKKVGYVNEVLGKKALRDIIGSVIKICGVATTAKFLDDIKNLGYYMAFKGGLSFNLADVLIPDEKDQLIQEGYTAVEQIMQDYSMGFITFNERYNQIIDTWTHINGRLSNVLIKQLSSDNDGFNSVFMMMDSGARGSKEQIRQLSGMRGLMAKPQKSGAEGGQIIENPILSNFKEGLSVLEYFISTHGARKGLADTALKTADAGYLTRRLVDVSHDVIITEEDCGTLRGLLTTELKQNEDVVASLYERILGRVSVHDIIHPTTGDIIVRAGEEIREQAAQIIEDSPIEAVEIRSVLTCESKKGVCAKCYGRNLATNRMVQRGEVVGVIAAQSIGEPGTQLTLRTFHVGGIASNVATENSLLSKYDGILEFEELRAVDVTDESHQVVVSRMTELRIADPNTGIILANHNIPYGAKLFFRQGDAVKKGDKIIEWDPFNAVIVSEVAGTLSFEGVVENVTFKMESDETTGLKEKIIIESKDKTMAPYARIIDENGEMLKNYSLPMGAHVVKDDGDTVKVGEILVKIPRSVGKAGDITGGLPRVTELFEARNPSNPAIVSEIDGEIGFGKLKRGNREITVTSKLGEEKKYLIPLSKQLLVQENDFVRAGTPLSDGAITPADILAIKGPTAVQEYIVNEVQDVYRLQGVKINDKHFEVIVRQMMRKVEIVDPGDTLFLEQQVVDKFEVMEENDRIWGKKVVIDAGDSQVLKAGQIVTARKLRDENSMLKRKDLKIVKVRDAKSATASQILQGITRAALQTKSFMSAASFQETTKVLNEAAICGKTDYLEGLKENVICGHLIPAGTGLRDYEKLVVMHRDDYEKATAERKSFLSVPTAEPAMEEAPSE.

Residues Cys-66, Cys-68, Cys-81, and Cys-84 each coordinate Zn(2+). Mg(2+) contacts are provided by Asp-473, Asp-475, and Asp-477. Positions 815, 889, 896, and 899 each coordinate Zn(2+).

The protein belongs to the RNA polymerase beta' chain family. As to quaternary structure, the RNAP catalytic core consists of 2 alpha, 1 beta, 1 beta' and 1 omega subunit. When a sigma factor is associated with the core the holoenzyme is formed, which can initiate transcription. The cofactor is Mg(2+). Requires Zn(2+) as cofactor.

The catalysed reaction is RNA(n) + a ribonucleoside 5'-triphosphate = RNA(n+1) + diphosphate. DNA-dependent RNA polymerase catalyzes the transcription of DNA into RNA using the four ribonucleoside triphosphates as substrates. In Porphyromonas gingivalis (strain ATCC BAA-308 / W83), this protein is DNA-directed RNA polymerase subunit beta'.